Here is a 119-residue protein sequence, read N- to C-terminus: Protein GSKIP homolog (119 aa).

Belongs to the GSKIP family.

The polypeptide is Protein GSKIP homolog (Drosophila melanogaster (Fruit fly)).